Reading from the N-terminus, the 578-residue chain is 15-cis-phytoene desaturase, chloroplastic/chromoplastic (578 aa).

A chloroplast and chromoplast-targeting transit peptide spans 1 to 87 (MDTGCLSSMN…PLENTINFLE (87 aa)). FAD contacts are provided by residues Ala-115, 134–135 (EA), Lys-142, 159–160 (HI), and Tyr-165. Arg-300 contributes to the substrate binding site. Ile-342 and Asp-531 together coordinate FAD. Ala-539 is a binding site for substrate. Position 541 (Met-541) interacts with FAD.

The protein belongs to the carotenoid/retinoid oxidoreductase family. Homotetramer. Homotetramer is the active form of the enzyme. FAD serves as cofactor.

Its subcellular location is the plastid. It is found in the chloroplast. The protein localises to the chromoplast. The protein resides in the membrane. It catalyses the reaction 2 a plastoquinone + 15-cis-phytoene = 9,9',15-tri-cis-zeta-carotene + 2 a plastoquinol. Its pathway is carotenoid biosynthesis; lycopene biosynthesis. With respect to regulation, inhibited by the herbicide norflurazon (NFZ). In terms of biological role, converts phytoene into zeta-carotene via the intermediary of phytofluene by the symmetrical introduction of two double bonds at the C-11 and C-11' positions of phytoene with a concomitant isomerization of two neighboring double bonds at the C9 and C9' positions from trans to cis. Active with decylplastoquinone (DPQ) as substrate. Also active with other benzoquinones, which are strongly preferred over naphthoquinones as substrates. The protein is 15-cis-phytoene desaturase, chloroplastic/chromoplastic (PDS1) of Oryza sativa subsp. indica (Rice).